Reading from the N-terminus, the 295-residue chain is 5'-adenylylsulfate reductase-like 6 (295 aa).

The N-terminal stretch at 1-22 (MEKKLTLLLLVVVVLFVNLTNA) is a signal peptide. The 139-residue stretch at 23-161 (TVRVQICPRE…LVAFYTDVTG (139 aa)) folds into the Thioredoxin domain. The N-linked (GlcNAc...) asparagine glycan is linked to Asn-136. A helical membrane pass occupies residues 208 to 228 (ATVFVLLRLLHLISPTMVVFV).

Its subcellular location is the membrane. This is 5'-adenylylsulfate reductase-like 6 (APRL6) from Arabidopsis thaliana (Mouse-ear cress).